Here is a 184-residue protein sequence, read N- to C-terminus: Prolyl-tRNA synthetase associated domain-containing protein 1 (184 aa).

This sequence belongs to the PRORSD1 family.

This chain is Prolyl-tRNA synthetase associated domain-containing protein 1 (Prorsd1), found in Danio rerio (Zebrafish).